Here is a 162-residue protein sequence, read N- to C-terminus: Retinoic acid receptor responder protein 2 (162 aa).

The first 20 residues, M1–A20, serve as a signal peptide directing secretion. 3 disulfides stabilise this stretch: C77–C87, C98–C117, and C101–C135. A propeptide spanning residues F156–P162 is cleaved from the precursor.

Post-translationally, secreted in an inactive precursor form, prochemerin, which is proteolytically processed by a variety of extracellular proteases to generate forms with differing levels of bioactivity. For example, the removal of five amino acids results in chemerin-157, which exhibits the highest activity, while removal of six amino acids results in chemerin-156 which has slightly less activity. Some proteases are able to cleave at more than one site and chemerin forms may be sequentially processed by different enzymes to modulate activity levels. The coordinated expression and activity of chemerin-modifying enzymes is essential for regulating its bioactivation, inactivation and, consequently, biological function. Cathepsin G cleaves six C-terminal amino acids from prochemerin (chemerin-156), elastase is able to cleave five (chemerin-157), seven (chemerin-155) or ten (chemerin-152), plasmin cleaves four amino acids (chemerin-158), and tryptase cleaves four (chemerin-158) or seven (chemerin-155). Multiple cleavages might be required to fully activate chemerin, with an initial tryptase cleavage resulting in chemerin with low activity (chemerin-158), and a second cleavage by carboxypeptidase N or B producing highly active chemerin (chemerin-157).

The protein resides in the secreted. In terms of biological role, adipocyte-secreted protein (adipokine) that regulates adipogenesis, metabolism and inflammation through activation of the chemokine-like receptor 1 (CMKLR1). Also acts as a ligand for CMKLR2. Can also bind to C-C chemokine receptor-like 2 (CCRL2), but with a lower affinity than it does to CMKLR1 or CMKLR2. Positively regulates adipocyte differentiation, modulates the expression of adipocyte genes involved in lipid and glucose metabolism and might play a role in angiogenesis, a process essential for the expansion of white adipose tissue. Also acts as a pro-inflammatory adipokine, causing an increase in secretion of pro-inflammatory and prodiabetic adipokines, which further impair adipose tissue metabolic function and have negative systemic effects including impaired insulin sensitivity, altered glucose and lipid metabolism, and a decrease in vascular function in other tissues. Can have both pro- and anti-inflammatory properties depending on the modality of enzymatic cleavage by different classes of proteases. Acts as a chemotactic factor for leukocyte populations expressing CMKLR1, particularly immature plasmacytoid dendritic cells, but also immature myeloid DCs, macrophages and natural killer cells. Exerts an anti-inflammatory role by preventing TNF/TNFA-induced VCAM1 expression and monocytes adhesion in vascular endothelial cells. The effect is mediated via inhibiting activation of NF-kappa-B and CRK/p38 through stimulation of AKT1/NOS3 signaling and nitric oxide production. Exhibits an antimicrobial function in the skin. The protein is Retinoic acid receptor responder protein 2 (RARRES2) of Bos taurus (Bovine).